The sequence spans 396 residues: MSEFIAENRGADAITRPNWSAVFSVAFCVACLIIVEFLPVSLLTPMAQDLGISEGVAGQSVTVTAFVAMFASLFITQTIQATDRRNVVILFAVLLTLSCLLVSFANSFSLLLIGRACLGLALGGFWAMSASLTMRLVPPRTVPKALSVIFGAVSIALVIAAPLGSFLGELIGWRNVFNAAAVMGVLCIFWIIKSLPSLPGEPSHQKQNTFRLLQRPGVMAGMIAIFMSFAGQFAFFTYIRPVYMNLAGFSVDGLTLVLLSFGIASFIGTSLSSFILKRSVKLALAGAPLILAVSALVLTLWGSDKIVATGVAIIWGLTFALVPVGWSTWITRSLADQAEKAGSIQVAVIQLANTCGAAIGGYALDNIGLTSPLMFSGTLMLLTALLVTAKVKMKKS.

The Cytoplasmic portion of the chain corresponds to 1-21 (MSEFIAENRGADAITRPNWSA). Residues 22–42 (VFSVAFCVACLIIVEFLPVSL) traverse the membrane as a helical segment. Topologically, residues 43–54 (LTPMAQDLGISE) are periplasmic. A helical membrane pass occupies residues 55-75 (GVAGQSVTVTAFVAMFASLFI). Residues 76 to 85 (TQTIQATDRR) lie on the Cytoplasmic side of the membrane. The chain crosses the membrane as a helical span at residues 86-106 (NVVILFAVLLTLSCLLVSFAN). Ser107 is a topological domain (periplasmic). A helical membrane pass occupies residues 108–128 (FSLLLIGRACLGLALGGFWAM). At 129–147 (SASLTMRLVPPRTVPKALS) the chain is on the cytoplasmic side. The chain crosses the membrane as a helical span at residues 148-168 (VIFGAVSIALVIAAPLGSFLG). Residues 169–175 (ELIGWRN) lie on the Periplasmic side of the membrane. A helical membrane pass occupies residues 176–196 (VFNAAAVMGVLCIFWIIKSLP). At 197–215 (SLPGEPSHQKQNTFRLLQR) the chain is on the cytoplasmic side. A helical transmembrane segment spans residues 216–236 (PGVMAGMIAIFMSFAGQFAFF). Over 237–255 (TYIRPVYMNLAGFSVDGLT) the chain is Periplasmic. Residues 256–276 (LVLLSFGIASFIGTSLSSFIL) form a helical membrane-spanning segment. The Cytoplasmic segment spans residues 277–281 (KRSVK). A helical membrane pass occupies residues 282-302 (LALAGAPLILAVSALVLTLWG). Topologically, residues 303–305 (SDK) are periplasmic. A helical membrane pass occupies residues 306–326 (IVATGVAIIWGLTFALVPVGW). Residues 327–343 (STWITRSLADQAEKAGS) lie on the Cytoplasmic side of the membrane. Residues 344–364 (IQVAVIQLANTCGAAIGGYAL) form a helical membrane-spanning segment. Topologically, residues 365 to 366 (DN) are periplasmic. The helical transmembrane segment at 367–387 (IGLTSPLMFSGTLMLLTALLV) threads the bilayer. Residues 388–396 (TAKVKMKKS) lie on the Cytoplasmic side of the membrane.

This sequence belongs to the major facilitator superfamily. DHA1 family. NepI (TC 2.A.1.2.26) subfamily.

It is found in the cell inner membrane. It carries out the reaction inosine(in) + H(+)(out) = inosine(out) + H(+)(in). It catalyses the reaction guanosine(in) + H(+)(out) = guanosine(out) + H(+)(in). Its function is as follows. Involved in the efflux of purine ribonucleosides, such as inosine and guanosine. This is Purine ribonucleoside efflux pump NepI from Shigella sonnei (strain Ss046).